A 383-amino-acid polypeptide reads, in one-letter code: Cytochrome b (383 aa).

The next 4 helical transmembrane spans lie at 32 to 52 (VGSLLGLCLVMQMASGMFLAM), 76 to 98 (WLMRYIHANGASFFFMCLYLHMG), 113 to 133 (VWSMGVMMFMLTMATAFMGYC), and 179 to 199 (FFALHYLLPFILAALVVMHFM). His82 and His96 together coordinate heme b. Residues His183 and His197 each coordinate heme b. His202 contributes to the a ubiquinone binding site. The next 4 membrane-spanning stretches (helical) occupy residues 225–245 (FVFKDLMTVFVFILMFSLFVF), 289–309 (LGGVMAMFAALLMLLMLPMTD), 321–341 (LSKLSFYLFLFNFFLLMNMGQ), and 348–368 (FIELGQFATVYYFSYFLMLVP).

This sequence belongs to the cytochrome b family. In terms of assembly, fungal cytochrome b-c1 complex contains 10 subunits; 3 respiratory subunits, 2 core proteins and 5 low-molecular weight proteins. Cytochrome b-c1 complex is a homodimer. Heme b serves as cofactor.

The protein resides in the mitochondrion inner membrane. Component of the ubiquinol-cytochrome c reductase complex (complex III or cytochrome b-c1 complex) that is part of the mitochondrial respiratory chain. The b-c1 complex mediates electron transfer from ubiquinol to cytochrome c. Contributes to the generation of a proton gradient across the mitochondrial membrane that is then used for ATP synthesis. This is Cytochrome b (COB) from Debaryomyces hansenii (strain ATCC 36239 / CBS 767 / BCRC 21394 / JCM 1990 / NBRC 0083 / IGC 2968) (Yeast).